A 405-amino-acid polypeptide reads, in one-letter code: L-carnitine CoA-transferase (405 aa).

2 residues coordinate CoA: Lys-97 and Arg-104. Asp-169 (nucleophile) is an active-site residue.

It belongs to the CoA-transferase III family. CaiB subfamily. As to quaternary structure, homodimer.

Its subcellular location is the cytoplasm. It carries out the reaction crotonobetainyl-CoA + (R)-carnitine = crotonobetaine + (R)-carnitinyl-CoA. It catalyses the reaction 4-(trimethylamino)butanoyl-CoA + (R)-carnitine = (R)-carnitinyl-CoA + 4-(trimethylamino)butanoate. Its pathway is amine and polyamine metabolism; carnitine metabolism. In terms of biological role, catalyzes the reversible transfer of the CoA moiety from gamma-butyrobetainyl-CoA to L-carnitine to generate L-carnitinyl-CoA and gamma-butyrobetaine. Is also able to catalyze the reversible transfer of the CoA moiety from gamma-butyrobetainyl-CoA or L-carnitinyl-CoA to crotonobetaine to generate crotonobetainyl-CoA. The polypeptide is L-carnitine CoA-transferase (Escherichia coli (strain K12 / MC4100 / BW2952)).